The following is a 358-amino-acid chain: 3-dehydroquinate synthase (358 aa).

Residues 105-109 (GVVGD), 129-130 (TT), lysine 142, lysine 151, and 169-172 (TLKT) contribute to the NAD(+) site. The Zn(2+) site is built by glutamate 184, histidine 245, and histidine 262.

Belongs to the sugar phosphate cyclases superfamily. Dehydroquinate synthase family. NAD(+) serves as cofactor. Co(2+) is required as a cofactor. Requires Zn(2+) as cofactor.

Its subcellular location is the cytoplasm. The enzyme catalyses 7-phospho-2-dehydro-3-deoxy-D-arabino-heptonate = 3-dehydroquinate + phosphate. Its pathway is metabolic intermediate biosynthesis; chorismate biosynthesis; chorismate from D-erythrose 4-phosphate and phosphoenolpyruvate: step 2/7. Its function is as follows. Catalyzes the conversion of 3-deoxy-D-arabino-heptulosonate 7-phosphate (DAHP) to dehydroquinate (DHQ). The polypeptide is 3-dehydroquinate synthase (Enterococcus faecalis (strain ATCC 700802 / V583)).